A 223-amino-acid polypeptide reads, in one-letter code: MASSLVSSFQPRSAFLGDRNVFKVSSTPFAQVGYSSKTIECKESRIGKQPIAVPSNVTIALEGQDLKVKGPLGELALTYPREVELTKEESGFLRVKKTVETRRANQMHGLFRTLTDNMVVGVSKGFEKKLILVGVGYRATVDGKELVLNLGFSHPVKMQIPDSLKVKVEENTRITVSGYDKSEIGQFAATVRKWRPPEPYKGKGVKYSDEIVRRKEGKAGKKK.

The transit peptide at 1 to 41 directs the protein to the chloroplast; sequence MASSLVSSFQPRSAFLGDRNVFKVSSTPFAQVGYSSKTIEC.

This sequence belongs to the universal ribosomal protein uL6 family. As to quaternary structure, part of the 50S ribosomal subunit.

It localises to the plastid. It is found in the chloroplast. In terms of biological role, this protein binds directly to 23S ribosomal RNA and is located at the aminoacyl-tRNA binding site of the peptidyltransferase center. This chain is Large ribosomal subunit protein uL6c (RPL6), found in Arabidopsis thaliana (Mouse-ear cress).